Consider the following 92-residue polypeptide: PqqA binding protein (92 aa).

This sequence belongs to the PqqD family. As to quaternary structure, monomer. Interacts with PqqE.

It functions in the pathway cofactor biosynthesis; pyrroloquinoline quinone biosynthesis. Functions as a PqqA binding protein and presents PqqA to PqqE, in the pyrroloquinoline quinone (PQQ) biosynthetic pathway. The chain is PqqA binding protein from Xanthomonas oryzae pv. oryzae (strain MAFF 311018).